A 294-amino-acid polypeptide reads, in one-letter code: Ribosomal RNA small subunit methyltransferase A (294 aa).

6 residues coordinate S-adenosyl-L-methionine: asparagine 31, leucine 33, glycine 58, glutamate 79, aspartate 104, and asparagine 129.

It belongs to the class I-like SAM-binding methyltransferase superfamily. rRNA adenine N(6)-methyltransferase family. RsmA subfamily.

Its subcellular location is the cytoplasm. It carries out the reaction adenosine(1518)/adenosine(1519) in 16S rRNA + 4 S-adenosyl-L-methionine = N(6)-dimethyladenosine(1518)/N(6)-dimethyladenosine(1519) in 16S rRNA + 4 S-adenosyl-L-homocysteine + 4 H(+). Specifically dimethylates two adjacent adenosines (A1518 and A1519) in the loop of a conserved hairpin near the 3'-end of 16S rRNA in the 30S particle. May play a critical role in biogenesis of 30S subunits. This Oceanobacillus iheyensis (strain DSM 14371 / CIP 107618 / JCM 11309 / KCTC 3954 / HTE831) protein is Ribosomal RNA small subunit methyltransferase A.